The chain runs to 475 residues: Citrate synthase, mitochondrial (475 aa).

Active-site residues include His310, His356, and Asp411.

It belongs to the citrate synthase family.

The protein localises to the mitochondrion matrix. It carries out the reaction oxaloacetate + acetyl-CoA + H2O = citrate + CoA + H(+). It functions in the pathway carbohydrate metabolism; tricarboxylic acid cycle; isocitrate from oxaloacetate: step 1/2. This chain is Citrate synthase, mitochondrial (cit-1), found in Aspergillus niger.